The chain runs to 234 residues: Phosphoribosylaminoimidazole-succinocarboxamide synthase (234 aa).

Belongs to the SAICAR synthetase family.

It carries out the reaction 5-amino-1-(5-phospho-D-ribosyl)imidazole-4-carboxylate + L-aspartate + ATP = (2S)-2-[5-amino-1-(5-phospho-beta-D-ribosyl)imidazole-4-carboxamido]succinate + ADP + phosphate + 2 H(+). It functions in the pathway purine metabolism; IMP biosynthesis via de novo pathway; 5-amino-1-(5-phospho-D-ribosyl)imidazole-4-carboxamide from 5-amino-1-(5-phospho-D-ribosyl)imidazole-4-carboxylate: step 1/2. The sequence is that of Phosphoribosylaminoimidazole-succinocarboxamide synthase from Pyrococcus furiosus (strain ATCC 43587 / DSM 3638 / JCM 8422 / Vc1).